Here is a 430-residue protein sequence, read N- to C-terminus: MVGYIGNVDIGVFDAEVANSMSAELERQNTLLQMIASENFVSRAVLQAQGSVLTNKYAEGYAGSRYYCGCALVDVVENLAVERLCRLFGCKFANVQPHSGSQANQQVFMALLKPGDTILGMSLDCGGHLTHGAAPNVSGRWFNAVSYGVNRDTGLIDMDEVEALALSAKPSLIIAGASSYPRRIDFAAFRAIADKVGAYLLADIAHYSGLIAGGCYPSPFGHAHVVTSTTHKTLRGPRGAVIMTDDEEIHKKIRLSVFPGMQGGPLMHVIAAKAVAFKEALHPDFKLYAQQVLENSRVLAGVLSSEGLDVVTGGTDSHIVLLDLRSKGVTGREVSSSLERAGIVCNKNAVPFDTEKPWVTSGIRLGSAAETSRGLGVPEFESIGRLVAKVVNACSLGQEKMSAAEAEVRREVNGLVRSLPMSAFPVCEVC.

Residues Leu-123 and 127–129 (GHL) each bind (6S)-5,6,7,8-tetrahydrofolate. An N6-(pyridoxal phosphate)lysine modification is found at Lys-232. Glu-248 lines the (6S)-5,6,7,8-tetrahydrofolate pocket.

This sequence belongs to the SHMT family. Homodimer. Pyridoxal 5'-phosphate serves as cofactor.

The protein localises to the cytoplasm. It catalyses the reaction (6R)-5,10-methylene-5,6,7,8-tetrahydrofolate + glycine + H2O = (6S)-5,6,7,8-tetrahydrofolate + L-serine. Its pathway is one-carbon metabolism; tetrahydrofolate interconversion. It functions in the pathway amino-acid biosynthesis; glycine biosynthesis; glycine from L-serine: step 1/1. Its function is as follows. Catalyzes the reversible interconversion of serine and glycine with tetrahydrofolate (THF) serving as the one-carbon carrier. This reaction serves as the major source of one-carbon groups required for the biosynthesis of purines, thymidylate, methionine, and other important biomolecules. Also exhibits THF-independent aldolase activity toward beta-hydroxyamino acids, producing glycine and aldehydes, via a retro-aldol mechanism. The protein is Serine hydroxymethyltransferase of Anaplasma marginale (strain St. Maries).